A 185-amino-acid polypeptide reads, in one-letter code: MELVVQSRETDKKSVIKKIRQQGGIPAVLYSGGKSLANVVIDARVFNKFLSTLESGALASTVFTLSYEGREIKALVKDIQYHVTTYDVIHLDFEELVEDREVRLNIPIRCINTVDCVGVKLGGSLRQVIRYMRVVCKPKDIVPFLELDVQSLGLSQTLKLSDIRIPEGIKPVTPLKEVAVTVARR.

It belongs to the bacterial ribosomal protein bL25 family. CTC subfamily. Part of the 50S ribosomal subunit; part of the 5S rRNA/L5/L18/L25 subcomplex. Contacts the 5S rRNA. Binds to the 5S rRNA independently of L5 and L18.

In terms of biological role, this is one of the proteins that binds to the 5S RNA in the ribosome where it forms part of the central protuberance. The polypeptide is Large ribosomal subunit protein bL25 (Chlamydia muridarum (strain MoPn / Nigg)).